Consider the following 882-residue polypeptide: DNA polymerase 1 (882 aa).

The disordered stretch occupies residues 1-31 (MTKQLTLFDIPSSKPAKSEQNTQQSQQSAPV). Polar residues predominate over residues 18–29 (SEQNTQQSQQSA).

This sequence belongs to the DNA polymerase type-B family. Interacts with PCNA subunit PCNA2 and weakly with PCNA3.

The catalysed reaction is DNA(n) + a 2'-deoxyribonucleoside 5'-triphosphate = DNA(n+1) + diphosphate. DNA synthesis is stimulated by PCNA heterotrimers. This polymerase possesses two enzymatic activities: DNA synthesis (polymerase) and an exonucleolytic activity that degrades single-stranded DNA in the 3'- to 5'-direction. DNA polymerase I, DNA ligase and the flap endonuclease may be constitutively associated with the PCNA heterotrimer forming a scanning complex able to couple DNA synthesis and Okazaki fragment maturation. The sequence is that of DNA polymerase 1 (dpo1) from Saccharolobus solfataricus (strain ATCC 35092 / DSM 1617 / JCM 11322 / P2) (Sulfolobus solfataricus).